Consider the following 133-residue polypeptide: Heat shock protein 15 (133 aa).

In terms of domain architecture, S4 RNA-binding spans 9-71 (VRLDKWLWAA…DERTVIVKAI (63 aa)). Positions 105–133 (NALTMPHPDRRPDKKERRDLLRFKHGDSE) are disordered. Basic and acidic residues predominate over residues 111-133 (HPDRRPDKKERRDLLRFKHGDSE).

Belongs to the HSP15 family. As to quaternary structure, monomer.

Functionally, involved in the recycling of free 50S ribosomal subunits that still carry a nascent chain. Binds RNA more specifically than DNA. Binds with very high affinity to the free 50S ribosomal subunit. Does not bind it when it is part of the 70S ribosome. The protein is Heat shock protein 15 (hslR) of Escherichia coli O157:H7.